Consider the following 551-residue polypeptide: Probable NADH-ubiquinone oxidoreductase C3A11.07, mitochondrial (551 aa).

Residues 1–37 (MLFSRSILRGMPKAGIPKSPLALSASRNLRLANSVRF) constitute a mitochondrion transit peptide. An FAD-binding site is contributed by 93–123 (TLVVLGAGWGATSILRTIDTSLFNVIVVSPR). An NAD(+)-binding site is contributed by 255–291 (VHTVVVGGGPTGMEFAGEMADFIEDDLKSWYPELADD).

It belongs to the NADH dehydrogenase family.

It is found in the mitochondrion. It carries out the reaction a quinone + NADH + H(+) = a quinol + NAD(+). The catalysed reaction is a ubiquinone + NADH + H(+) = a ubiquinol + NAD(+). In terms of biological role, catalyzes the oxidation of NADH. The polypeptide is Probable NADH-ubiquinone oxidoreductase C3A11.07, mitochondrial (Schizosaccharomyces pombe (strain 972 / ATCC 24843) (Fission yeast)).